We begin with the raw amino-acid sequence, 401 residues long: tRNA(Ile)-lysidine synthase (401 aa).

An ATP-binding site is contributed by 17–22 (SGGPDS).

Belongs to the tRNA(Ile)-lysidine synthase family.

It is found in the cytoplasm. The catalysed reaction is cytidine(34) in tRNA(Ile2) + L-lysine + ATP = lysidine(34) in tRNA(Ile2) + AMP + diphosphate + H(+). In terms of biological role, ligates lysine onto the cytidine present at position 34 of the AUA codon-specific tRNA(Ile) that contains the anticodon CAU, in an ATP-dependent manner. Cytidine is converted to lysidine, thus changing the amino acid specificity of the tRNA from methionine to isoleucine. This chain is tRNA(Ile)-lysidine synthase, found in Mycoplasma mycoides subsp. mycoides SC (strain CCUG 32753 / NCTC 10114 / PG1).